We begin with the raw amino-acid sequence, 171 residues long: Squamosa promoter-binding protein 2 (171 aa).

Disordered stretches follow at residues glycine 20–valine 46 and lysine 57–glycine 76. Residues glutamate 22 to glutamine 40 show a composition bias toward acidic residues. The segment at glutamine 82 to serine 159 adopts an SBP-type zinc-finger fold. Residues cysteine 85, cysteine 90, cysteine 107, histidine 110, cysteine 126, cysteine 129, histidine 133, and cysteine 145 each contribute to the Zn(2+) site. The Bipartite nuclear localization signal signature appears at lysine 142 to lysine 158. Over residues leucine 149–lysine 158 the composition is skewed to basic residues. Positions leucine 149–arginine 171 are disordered. The segment covering serine 159–arginine 171 has biased composition (basic and acidic residues).

The protein localises to the nucleus. In terms of biological role, probable transcriptional factor. Binds to the promoter of the SQUAMOSA gene. The chain is Squamosa promoter-binding protein 2 (SBP2) from Antirrhinum majus (Garden snapdragon).